Reading from the N-terminus, the 152-residue chain is Large ribosomal subunit protein bL9 (152 aa).

This sequence belongs to the bacterial ribosomal protein bL9 family.

Its function is as follows. Binds to the 23S rRNA. This is Large ribosomal subunit protein bL9 from Mycobacterium bovis (strain ATCC BAA-935 / AF2122/97).